We begin with the raw amino-acid sequence, 1123 residues long: Rabphilin-1 (1123 aa).

Positions 1 to 17 (MTKSTKLRHCKQKKKKP) are enriched in basic residues. 2 disordered regions span residues 1-56 (MTKS…GSRS) and 88-140 (SAHN…PSTH). The segment covering 36 to 46 (DAATTTSTTDA) has biased composition (low complexity). The RabBD domain occupies 215–341 (KAQTGSITAA…KKSGAWFYKE (127 aa)). The segment at 263-328 (GNGVTHCLLC…LCKICSEARE (66 aa)) adopts an FYVE-type zinc-finger fold. 8 residues coordinate Zn(2+): C269, C272, C288, C291, C296, C300, C320, and C323. 4 stretches are compositionally biased toward polar residues: residues 365–375 (PNASSAATPLS), 387–400 (TMPS…TTPK), 410–428 (PGLQ…GTRR), and 487–497 (ASSSDGESFVQ). Disordered regions lie at residues 365–710 (PNAS…VGSA), 737–779 (TSRA…LRTS), and 796–818 (HIVS…VPIP). The span at 531-541 (SRREANMERFS) shows a compositional bias: basic and acidic residues. Residues 563 to 574 (ESRPSTRSTSPR) are compositionally biased toward low complexity. 2 stretches are compositionally biased toward polar residues: residues 605–632 (VVQS…QQQA) and 649–666 (PDRT…TSLV). The segment covering 742-753 (SPLAASSSFLSS) has biased composition (low complexity). Over residues 756–768 (DDTKQKNRRRDGV) the composition is skewed to basic and acidic residues. Positions 803 to 818 (TSSTTSNQNHTSVPIP) are enriched in low complexity. C2 domains are found at residues 844–967 (SLGS…NLYL) and 984–1103 (DRGK…RQWI). Ca(2+) is bound by residues D875, D881, D936, D938, D943, D1015, D1021, D1075, D1077, and D1083.

Requires Ca(2+) as cofactor.

The protein localises to the synapse. Functionally, rab-3 effector. This Caenorhabditis elegans protein is Rabphilin-1 (rbf-1).